The sequence spans 423 residues: Adenylosuccinate synthetase (423 aa).

Residues 11–17 (GDEGKGK) and 39–41 (GHT) each bind GTP. Catalysis depends on Asp-12, which acts as the Proton acceptor. 2 residues coordinate Mg(2+): Asp-12 and Gly-39. Residues 12-15 (DEGK), 37-40 (NAGH), Thr-127, Arg-141, Gln-223, Thr-238, and Arg-302 contribute to the IMP site. The active-site Proton donor is the His-40. 298-304 (TTTGRSR) contributes to the substrate binding site. GTP is bound by residues Arg-304, 330 to 332 (KLD), and 412 to 414 (SVG).

This sequence belongs to the adenylosuccinate synthetase family. In terms of assembly, homodimer. It depends on Mg(2+) as a cofactor.

The protein localises to the cytoplasm. The enzyme catalyses IMP + L-aspartate + GTP = N(6)-(1,2-dicarboxyethyl)-AMP + GDP + phosphate + 2 H(+). The protein operates within purine metabolism; AMP biosynthesis via de novo pathway; AMP from IMP: step 1/2. Functionally, plays an important role in the de novo pathway of purine nucleotide biosynthesis. Catalyzes the first committed step in the biosynthesis of AMP from IMP. The chain is Adenylosuccinate synthetase from Methanococcoides burtonii (strain DSM 6242 / NBRC 107633 / OCM 468 / ACE-M).